A 511-amino-acid polypeptide reads, in one-letter code: MRIIPRTMSTQHPDNAKVPEWAKSEVIEGEDEVKEAFLAYSMYGVHEVMWDAEGKDVDTHVVRKLLSNYPDYFREHILGKDVFLTYRLPNPKVEGADRKVFAETMESIPITYDLAEKFYGNGITVPVFEVILPMTTSNLEIISVARYYEKAVANEDELELYDGVKVKDLVGEIYPKVIEVIPLVEDRDSLQNIDNIVEGYYKVIKPKYMRVFLARSDPAMNYGMITAVLSVKIALSELYKLSESLNFEIYPIIGVGSLPFRGHLSPENYEKVLEEYKGVYTYTIQSAFKYDYDYDKVKSAISSINNSRIGPAKILEKYEEDVLRKITILYTERYQPIIESLANAINDVSVLLPRRRARKLHIGLFGYSRSAGKVSLPRAISFVGSLYSIGIPPELIGISSLSNLDEKEWDIFKQNYVNFKHDLQTAARFFNWESFELIKDIWKISEDTIAKIKEDIDYAESVIGIKLGGIDYDSRKHILMSSLFLLSFKEKILQESKKYLYEMALIRRSLG.

It belongs to the PEPCase type 2 family. In terms of assembly, homotetramer. Mg(2+) serves as cofactor.

It catalyses the reaction oxaloacetate + phosphate = phosphoenolpyruvate + hydrogencarbonate. Functionally, catalyzes the irreversible beta-carboxylation of phosphoenolpyruvate (PEP) to form oxaloacetate (OAA), a four-carbon dicarboxylic acid source for the tricarboxylic acid cycle. This Saccharolobus islandicus (strain Y.G.57.14 / Yellowstone #1) (Sulfolobus islandicus) protein is Phosphoenolpyruvate carboxylase.